Here is a 452-residue protein sequence, read N- to C-terminus: Trigger factor (452 aa).

The PPIase FKBP-type domain occupies 170–255 (GDRVTIDFTG…VKSVAAPGPL (86 aa)).

It belongs to the FKBP-type PPIase family. Tig subfamily.

Its subcellular location is the cytoplasm. The catalysed reaction is [protein]-peptidylproline (omega=180) = [protein]-peptidylproline (omega=0). Its function is as follows. Involved in protein export. Acts as a chaperone by maintaining the newly synthesized protein in an open conformation. Functions as a peptidyl-prolyl cis-trans isomerase. In Xanthobacter autotrophicus (strain ATCC BAA-1158 / Py2), this protein is Trigger factor.